A 487-amino-acid polypeptide reads, in one-letter code: Bifunctional cytokinin biosynthesis protein (487 aa).

Residues Met1–Ser266 form an adenylate isopentenyltransferase region. Positions Thr267–Val487 are cytokinin riboside 5'-monophosphate phosphoribohydrolase. Residues Glu352, Arg380–Lys381, Gly403–Glu409, and Thr415 contribute to the substrate site.

This sequence in the N-terminal section; belongs to the IPP transferase family. It in the C-terminal section; belongs to the LOG family.

The enzyme catalyses dimethylallyl diphosphate + AMP = N(6)-(dimethylallyl)adenosine 5'-phosphate + diphosphate. The catalysed reaction is N(6)-(dimethylallyl)adenosine 5'-phosphate + H2O = N(6)-dimethylallyladenine + D-ribose 5-phosphate. It catalyses the reaction 9-ribosyl-trans-zeatin 5'-phosphate + H2O = trans-zeatin + D-ribose 5-phosphate. It functions in the pathway secondary metabolite biosynthesis. Bifunctional cytokinin synthesis protein; part of the gene cluster that mediates the biosynthesis of cytokinins such as fusatin, fusatinic acids or 8-oxofusatin, known for their growth promoting and anti-senescence activities toward host plants. FCK1 is a bifunctional enzyme that performs the first steps in the biosynthesis of Fusarium cytokinins. It first condenses adenosine monophosphate (AMP) with dimethylallyl diphosphate (DMAPP) to yield isoprenyl adenosine monophosphate. It then catalyzes the removal of the phosphoribose to produce isopentenylaldehyde. The cytochrome P450 monooxygenase then converts isopentenylaldehyde to trans-zeatin. A condensation step converts trans-zeatin to fusatin which is further modified to produce fusatinic acid. The mechanism for oxidation of fusatin to fusatinic acid remains unknown. 8-oxofusatin could be produced through several pathways, via direct oxygenation of fusatin, or via the 8-oxo-pentenyladenine intermediate which itself must arise from either the prenylation of 8-oxo-AMP by FCK1 and/or oxygenation of isopentenylaldehyde. Both the FCK3 and FCK4 enzymes act downstream of the identified cytokinins to produce yet unidentified compounds. The chain is Bifunctional cytokinin biosynthesis protein from Fusarium pseudograminearum (strain CS3096) (Wheat and barley crown-rot fungus).